Consider the following 177-residue polypeptide: MLEKLIERVLFATRWLLAPLCIAMSLVLVVLGYVFMKELWHMLSHLDTISETDLVLSALGLVDLLFMAGLVLMVLLASYESFVSKLDKVDASEITWLKHTDFNALKLKVSLSIVAISAIFLLKRYMSLEDVLSSIPKDTPLSHNPIFWQVVIHLVFVCSALLAAVTNNIAFSQNKGH.

4 helical membrane passes run 15–35 (WLLA…GYVF), 54–74 (LVLS…VLMV), 102–122 (FNAL…IFLL), and 145–165 (PIFW…LAAV).

This sequence belongs to the UPF0114 family.

It localises to the cell membrane. This is UPF0114 protein HPAG1_0183 from Helicobacter pylori (strain HPAG1).